We begin with the raw amino-acid sequence, 413 residues long: L-cysteine:1D-myo-inositol 2-amino-2-deoxy-alpha-D-glucopyranoside ligase (413 aa).

The tract at residues 1-21 is disordered; the sequence is MQSWSDTALPSVPGQGPPLRL. A Zn(2+)-binding site is contributed by cysteine 43. L-cysteinyl-5'-AMP is bound by residues 43–46, threonine 58, and 81–83; these read CGIT and NVT. The short motif at 45 to 55 is the 'HIGH' region element; the sequence is ITPYDATHLGH. The 'ERGGDP' region signature appears at 187–192; that stretch reads ERGGDP. Tryptophan 227 provides a ligand contact to L-cysteinyl-5'-AMP. Residue cysteine 231 participates in Zn(2+) binding. An L-cysteinyl-5'-AMP-binding site is contributed by 249–251; it reads GSD. Histidine 256 provides a ligand contact to Zn(2+). Isoleucine 283 is a binding site for L-cysteinyl-5'-AMP. Positions 289–293 match the 'KMSKS' region motif; that stretch reads KMSKS.

Belongs to the class-I aminoacyl-tRNA synthetase family. MshC subfamily. In terms of assembly, monomer. Requires Zn(2+) as cofactor.

It carries out the reaction 1D-myo-inositol 2-amino-2-deoxy-alpha-D-glucopyranoside + L-cysteine + ATP = 1D-myo-inositol 2-(L-cysteinylamino)-2-deoxy-alpha-D-glucopyranoside + AMP + diphosphate + H(+). Its function is as follows. Catalyzes the ATP-dependent condensation of GlcN-Ins and L-cysteine to form L-Cys-GlcN-Ins. This chain is L-cysteine:1D-myo-inositol 2-amino-2-deoxy-alpha-D-glucopyranoside ligase, found in Rhodococcus erythropolis (strain PR4 / NBRC 100887).